The following is a 334-amino-acid chain: AA9 family lytic polysaccharide monooxygenase A (334 aa).

A signal peptide spans 1–22 (MSPSFKSTAILGAVALAARVRA). Cu(2+) is bound by residues histidine 23 and histidine 108. Cystine bridges form between cysteine 78/cysteine 200 and cysteine 119/cysteine 123. Residue asparagine 160 is glycosylated (N-linked (GlcNAc...) asparagine). 2 residues coordinate O2: histidine 186 and glutamine 195. Cu(2+) is bound at residue tyrosine 197. N-linked (GlcNAc...) asparagine glycosylation is present at asparagine 208. The interval 244–304 (GPALYTGGSS…PSPSLPVEIP (61 aa)) is disordered. A compositionally biased stretch (low complexity) spans 249–265 (TGGSSPSPNPPTSTQSP).

The protein belongs to the polysaccharide monooxygenase AA9 family. Cu(2+) is required as a cofactor.

Its subcellular location is the secreted. It catalyses the reaction [(1-&gt;4)-beta-D-glucosyl]n+m + reduced acceptor + O2 = 4-dehydro-beta-D-glucosyl-[(1-&gt;4)-beta-D-glucosyl]n-1 + [(1-&gt;4)-beta-D-glucosyl]m + acceptor + H2O.. In terms of biological role, lytic polysaccharide monooxygenase (LPMO) that depolymerizes crystalline and amorphous polysaccharides via the oxidation of scissile alpha- or beta-(1-4)-glycosidic bonds, yielding C1 or C4 oxidation products. Catalysis by LPMOs requires the reduction of the active-site copper from Cu(II) to Cu(I) by a reducing agent and H(2)O(2) or O(2) as a cosubstrate. Active on hemicelluloses, including xylan, glucomannan, and xyloglucan. Shows clear activity on cellooligosaccharides, generating C4 oxidation products. Also displays activity on konjac glucomannan (KGM), a linear beta-1,4-linked mannan with randomly distributed glucosyl residues; as well as trace activity on lichenan, a linear beta-1,3-beta-1,4-glucan with a 1:2 ratio of beta-1,3 to beta-1,4 linkages. Has no activity on ivory nut mannan (INM), a linear beta-1,4-linked mannan without substitutions. This is AA9 family lytic polysaccharide monooxygenase A from Malbranchea cinnamomea (Thermophilic fungus).